The sequence spans 397 residues: Elongation factor Tu (397 aa).

The 197-residue stretch at 10–206 (KPHVNIGTIG…AVDDSIPEPQ (197 aa)) folds into the tr-type G domain. Residues 19–26 (GHIDHGKT) form a G1 region. A GTP-binding site is contributed by 19–26 (GHIDHGKT). Thr-26 is a Mg(2+) binding site. The G2 stretch occupies residues 62 to 66 (GITIS). Positions 83–86 (DCPG) are G3. Residues 83–87 (DCPGH) and 138–141 (NKAD) contribute to the GTP site. Residues 138–141 (NKAD) are G4. The tract at residues 176–178 (SAL) is G5.

This sequence belongs to the TRAFAC class translation factor GTPase superfamily. Classic translation factor GTPase family. EF-Tu/EF-1A subfamily. In terms of assembly, monomer.

The protein localises to the cytoplasm. The catalysed reaction is GTP + H2O = GDP + phosphate + H(+). GTP hydrolase that promotes the GTP-dependent binding of aminoacyl-tRNA to the A-site of ribosomes during protein biosynthesis. The sequence is that of Elongation factor Tu from Frankia alni (strain DSM 45986 / CECT 9034 / ACN14a).